The primary structure comprises 378 residues: D-galactarolactone cycloisomerase (378 aa).

Positions 194, 220, and 246 each coordinate Mg(2+). Residue His296 is the Proton acceptor of the active site.

It belongs to the mandelate racemase/muconate lactonizing enzyme family. Homooctamer. The cofactor is Mg(2+).

The enzyme catalyses D-glucaro-1,4-lactone = 5-dehydro-4-deoxy-D-glucarate + H(+). It carries out the reaction D-galactaro-1,4-lactone = 5-dehydro-4-deoxy-D-glucarate + H(+). It functions in the pathway carbohydrate acid metabolism; D-galacturonate degradation via prokaryotic oxidative pathway. Its function is as follows. Catalyzes the ring opening of D-galactaro-1,4-lactone to yield 5-keto-4-deoxy-D-glucarate (KDG) via a beta-elimination reaction. This is a step in the oxidative degradation pathway of D-galacturonate, which allows A.tumefaciens to utilize D-galacturonate as a sole carbon source. To a lesser extent, can also use D-glucaro-1,4-lactone as substrate to produce KDG, but cannot use D-galactaro-1,5-lactone, D-glucaro-6,3-lactone and linear D-glucarate. This is D-galactarolactone cycloisomerase (gci) from Agrobacterium fabrum (strain C58 / ATCC 33970) (Agrobacterium tumefaciens (strain C58)).